The sequence spans 446 residues: T-box transcription factor TBX20 (446 aa).

Residues 50–80 (SCHPNLGDLPPLETHSDFSSGGGTGSGAPLC) are disordered. Residues 108–287 (LWDKFHELGT…SNPFAKGFRD (180 aa)) constitute a DNA-binding region (T-box).

It is found in the nucleus. In terms of biological role, transcriptional regulator that may play a very early role in the differentiation of the cardiac precursors. This Danio rerio (Zebrafish) protein is T-box transcription factor TBX20 (tbx20).